A 780-amino-acid polypeptide reads, in one-letter code: Cullin-5 (780 aa).

A Phosphoserine modification is found at Ser-34. Thr-210 is modified (phosphothreonine). A Cullin neddylation domain is found at 711–772 (RILRTQEAII…HRYIRRDEAD (62 aa)). Lys-724 is covalently cross-linked (Glycyl lysine isopeptide (Lys-Gly) (interchain with G-Cter in NEDD8)).

It belongs to the cullin family. As to quaternary structure, component of multiple cullin-5-RING E3 ubiquitin-protein ligase complexes (ECS complexes, also named CRL5 complexes) formed of CUL5, Elongin BC (ELOB and ELOC), RNF7/RBX2 and a variable SOCS box domain-containing protein as substrate-specific recognition component. CUL5-containing ECS complexes specifically contain RNF7/RBX2, and not RBX1, as catalytic subunit. Component of the ECS(ASB2) complex with the substrate recognition component ASB2. Component of the ECS(ASB6) complex with the substrate recognition component ASB6. Component of the ECS(ASB7) complex with the substrate recognition component ASB7. Component of the ECS(ASB9) complex with the substrate recognition component ASB9. Component of the ECS(ASB11) complex with the substrate recognition component ASB11. Component of the ECS(ASB12) complex with the substrate recognition component ASB12. Component of the ECS(LRRC41) complex with the substrate recognition component LRRC41. Component of the ECS(SOCS1) complex with the substrate recognition component SOCS1. Component of the ECS(SOCS2) complex with the substrate recognition component SOCS2. Component of the ECS(WSB1) complex with the substrate recognition subunit WSB1. Component of the ECS(SOCS3) complex with the substrate recognition component SOCS3. Component of the ECS(SOCS7) complex with the substrate recognition component SOCS7. Component of the ECS(SPSB1) complex with the substrate recognition component SPSB1. Component of the ECS(SPSB3) complex with the substrate recognition component SPSB3. Component of the ECS(SPSB2) complex with the substrate recognition component SPSB2. Component of the ECS(SPSB4) complex with the substrate recognition component SPSB4. Component of the ECS(RAB40) complex with the substrate recognition subunit RAB40A, RAB40B or RAB40C. Component of the ECS(KLHDC1) complex with the substrate recognition component KLHDC1. Component of the ECS(PCMTD1) complex with the substrate recognition subunit PCMTD1. May also form complexes containing RBX1 and ELOA or VHL; additional evidence is however required to confirm this result in vivo. Interacts (when neddylated) with ARIH2; leading to activate the E3 ligase activity of ARIH2. Interacts with ERCC6; the interaction is induced by DNA damaging agents or inhibitors of RNA polymerase II elongation. Interacts with ELOA (via the BC-box). Interacts (unneddylated form) with DCUN1D1, DCUN1D2, DCUN1D3, DCUN1D4 and DCUN1D5; these interactions promote the cullin neddylation. Neddylated; which enhances the ubiquitination activity of ECS complexes and prevents binding of the inhibitor CAND1. Deneddylated via its interaction with the COP9 signalosome (CSN).

Its subcellular location is the nucleus. The protein operates within protein modification; protein ubiquitination. Its function is as follows. Core component of multiple cullin-5-RING E3 ubiquitin-protein ligase complexes (ECS complexes, also named CRL5 complexes), which mediate the ubiquitination and subsequent proteasomal degradation of target proteins. Acts a scaffold protein that contributes to catalysis through positioning of the substrate and the ubiquitin-conjugating enzyme. The functional specificity of the E3 ubiquitin-protein ligase complex depends on the variable SOCS box-containing substrate recognition component. Acts as a key regulator of neuron positioning during cortex development: component of various SOCS-containing ECS complexes, such as the ECS(SOCS7) complex, that regulate reelin signaling by mediating ubiquitination and degradation of DAB1. ECS(SOCS1) seems to direct ubiquitination of JAK2. The ECS(SOCS2) complex mediates the ubiquitination and subsequent proteasomal degradation of phosphorylated EPOR and GHR. The ECS(SPSB3) complex catalyzes ubiquitination of nuclear CGAS. ECS(KLHDC1) complex is part of the DesCEND (destruction via C-end degrons) pathway and mediates ubiquitination and degradation of truncated SELENOS selenoprotein produced by failed UGA/Sec decoding, which ends with a glycine. The ECS(ASB9) complex mediates ubiquitination and degradation of CKB. As part of some ECS complex, promotes 'Lys-11'-linked ubiquitination and degradation of BTRC. As part of a multisubunit ECS complex, polyubiquitinates monoubiquitinated POLR2A. As part of the ECS(RAB40C) complex, mediates ANKRD28 ubiquitination and degradation, thereby regulating protein phosphatase 6 (PP6) complex activity and focal adhesion assembly during cell migration. As part of the ECS(RAB40A) complex, mediates RHOU 'Lys-48'-linked ubiquitination and degradation, thus inhibiting focal adhesion disassembly during cell migration. As part of the ECS(RAB40B) complex, mediates LIMA1/EPLIN and RAP2 ubiquitination, thereby regulating actin cytoskeleton dynamics and stress fiber formation during cell migration. May form a cell surface vasopressin receptor. This is Cullin-5 from Mus musculus (Mouse).